We begin with the raw amino-acid sequence, 7192 residues long: Nonribosomal peptide synthetase gloA (7192 aa).

Residues 1–48 (MTPSRSLENGEKQMNWNESPQTASPKNVLRDSNSNGNYVNGHGTNING) are compositionally biased toward polar residues. Residues 1 to 52 (MTPSRSLENGEKQMNWNESPQTASPKNVLRDSNSNGNYVNGHGTNINGDGSD) form a disordered region. The Carrier 1 domain occupies 105-181 (HSTSKFKEEF…GLFATANFRP (77 aa)). Ser-142 bears the O-(pantetheine 4'-phosphoryl)serine mark. Positions 239-634 (EDVYPCTPLQ…TYTVQCLCNP (396 aa)) are condensation 1. Residues 675-1047 (QDQVNIQPAK…SLMYLGRCDS (373 aa)) form an adenylation 1 region. Positions 1190–1266 (APSTDAEKQV…DLAFVIQRRL (77 aa)) constitute a Carrier 2 domain. Ser-1227 is subject to O-(pantetheine 4'-phosphoryl)serine. A condensation 2 region spans residues 1316–1736 (EDIYPCTPLQ…MSWLSDYDEE (421 aa)). An adenylation 2 region spans residues 1758–2154 (QEQTKLRPNA…GRRDTQIKIR (397 aa)). The region spanning 2288–2364 (APSTREECLV…ELAELLAKRS (77 aa)) is the Carrier 3 domain. Position 2325 is an O-(pantetheine 4'-phosphoryl)serine (Ser-2325). The interval 2407–2829 (VEDVYPCTPL…LIAPEDQEQI (423 aa)) is condensation 3. The tract at residues 2849 to 3245 (YKQVMARPQA…GRRDDQIKIR (397 aa)) is adenylation 3. The Carrier 4 domain maps to 3378–3455 (TPSTKMEKVI…DLASVMTEHR (78 aa)). Ser-3415 carries the post-translational modification O-(pantetheine 4'-phosphoryl)serine. Residues 3502-3891 (EDIYPCTALQ…NGVLDQFVYI (390 aa)) form a condensation 4 region. An adenylation 4 region spans residues 3920–4320 (QEQALARPTA…ARRDMQVKIR (401 aa)). One can recognise a Carrier 5 domain in the interval 4453-4529 (LPSTQVELQL…ELAVILDGRK (77 aa)). Ser-4490 carries the post-translational modification O-(pantetheine 4'-phosphoryl)serine. The condensation 5 stretch occupies residues 4574-4971 (EDIYPCTPLQ…QFEYVVQKFH (398 aa)). The segment at 5013–5414 (DDHVAARPMA…GRQDLQVKIR (402 aa)) is adenylation 5. Positions 5551 to 5627 (APDTDLGRLI…DLVNTLSNRS (77 aa)) constitute a Carrier 6 domain. Ser-5588 bears the O-(pantetheine 4'-phosphoryl)serine mark. The segment at 5674–6071 (EDVYPSTPLQ…CVVQRILTQS (398 aa)) is condensation 6. The interval 6111 to 6507 (QAQVKKSPAA…GRRDLQVKIR (397 aa)) is adenylation 6. Residues 6645-6721 (NPSTTMERQL…DLAVVLTDRL (77 aa)) form the Carrier 7 domain. The residue at position 6682 (Ser-6682) is an O-(pantetheine 4'-phosphoryl)serine. A condensation 7 region spans residues 6795-7178 (NGPCDTRALK…NPLSPVKQVL (384 aa)).

This sequence belongs to the NRP synthetase family.

It participates in mycotoxin biosynthesis. Its function is as follows. Nonribosomal peptide synthetase; part of the gene cluster that mediates the biosynthesis of pneumocandins, lipohexapeptides of the echinocandin family that prevent fungal cell wall formation by non-competitive inhibition of beta-1,3-glucan synthase. The 10,12-dimethylmyristoyl side chain is synthesized by the reducing polyketide synthase gloL/GLPKS4. The thioesterase gloN/GLHYD exclusively interacts with gloL/GLPKS4 to maintain turnover of the polyketide side chain. The 10R,12S-dimethylmyristic acid is then transferred to the first thiolation domain of the nonribosomal peptide synthetase gloA/GLNRPS4 by the acyl-AMP ligase gloD/GLligase, followed by its acylation to L-ornithine to trigger elongation of the cyclic hexapeptide. L-ornithine, 4R-hydroxyl-L-proline (generated from L-proline by the dioxygenase gloF/GLOXY2), 3S-hydroxyl-L-homotyrosine (generated by gloG/GLHtyB, gloH/GLHtyA, gloI/GLHtyC, gloJ/GLHtyD and hydroxylated at C-3 by the dioxygenase gloM/GLOXY1), 3R-hydroxyl-L-glutamine (generated from L-glutamine probably by the dioxygenase gloE/GLOXY3) and 3S-hydroxyl-L-proline (generated from L-proline by the dioxygenase gloF/GLOXY2 to yield pneumocandin B0), or 3S-hydroxyl-4S-methyl-L-proline (generated from L-leucine by the dioxygenase gloC/GLOXY4 to yield pneumocandin A0) are sequentially added to the growing chain. The last C domain of gloA/GLNRPS4 is proposed to be responsible for cyclization by condensation to form the peptide bond between L-ornithine and 3S-hydroxyl-4S-methyl-L-proline (for pneumocandin A0) or 3S-hydroxyl-L-proline (for pneumocandin B0). Finally, the subsequent C-4 hydroxylation of 3S-hydroxyl-L-homotyrosine and L-ornithine dihydroxylation at C-4 and C-5 are performed by the cytochrome P450 monooxygenases gloP/GLP450-1 and gloO/GLP450-2, respectively. The sequence is that of Nonribosomal peptide synthetase gloA from Glarea lozoyensis (strain ATCC 20868 / MF5171).